Here is a 340-residue protein sequence, read N- to C-terminus: MGAPHFGPGGVQVGALLLLGFAGLVSGLSLEPVYWNSANKRFQAEGGYVLYPQIGDRLDLLCPRARPPGPHSSPSYEFYKLYLVEGAQGRRCEAPPAPNLLLTCDRPDLDLRFTIKFQEYSPNLWGHEFRSHHDYYIIATSDGTREGLESLQGGVCLTRGMKVLLRVGQSPRGGAVPRKPVSEMPMERDRGAAHSAEPGRDTIPGDPSSNATSRGAEGPLPPPSMPAVAGAAGGMALLLLGVAGAGGAMCWRRRRAKPSESRHPGPGSFGRGGSLGLGGGGGMGPREAEPGELGIALRGGGTADPPFCPHYEKVSGDYGHPVYIVQDGPPQSPPNIYYKV.

The N-terminal stretch at 1–27 (MGAPHFGPGGVQVGALLLLGFAGLVSG) is a signal peptide. The Ephrin RBD domain occupies 28–167 (LSLEPVYWNS…TRGMKVLLRV (140 aa)). Residues 28–227 (LSLEPVYWNS…GPLPPPSMPA (200 aa)) are Extracellular-facing. 2 cysteine pairs are disulfide-bonded: C62–C104 and C92–C156. Positions 168–227 (GQSPRGGAVPRKPVSEMPMERDRGAAHSAEPGRDTIPGDPSSNATSRGAEGPLPPPSMPA) are disordered. The segment covering 185 to 200 (PMERDRGAAHSAEPGR) has biased composition (basic and acidic residues). N-linked (GlcNAc...) asparagine glycosylation occurs at N210. A helical transmembrane segment spans residues 228 to 248 (VAGAAGGMALLLLGVAGAGGA). At 249–340 (MCWRRRRAKP…QSPPNIYYKV (92 aa)) the chain is on the cytoplasmic side. The interval 254–300 (RRAKPSESRHPGPGSFGRGGSLGLGGGGGMGPREAEPGELGIALRGG) is disordered. The segment covering 267 to 284 (GSFGRGGSLGLGGGGGMG) has biased composition (gly residues). Position 271 is an omega-N-methylarginine (R271). Position 274 is a phosphoserine (S274). The PDZ-binding motif lies at 338-340 (YKV).

The protein belongs to the ephrin family. In terms of assembly, interacts with GRIP1 and GRIP2. As to expression, expressed on lateral floor plate cells, specifically on commissural axon segments that have passed through the floor plate. Expressed in cells of the retinal ganglion cell layer during retinal axon guidance to the optic disk. Expressed in myogenic progenitor cells.

It is found in the membrane. Functionally, cell surface transmembrane ligand for Eph receptors, a family of receptor tyrosine kinases which are crucial for migration, repulsion and adhesion during neuronal, vascular and epithelial development. Binds promiscuously Eph receptors residing on adjacent cells, leading to contact-dependent bidirectional signaling into neighboring cells. The signaling pathway downstream of the receptor is referred to as forward signaling while the signaling pathway downstream of the ephrin ligand is referred to as reverse signaling. May play a pivotal role in forebrain function. Binds to, and induce the collapse of, commissural axons/growth cones in vitro. May play a role in constraining the orientation of longitudinally projecting axons. The polypeptide is Ephrin-B3 (Efnb3) (Mus musculus (Mouse)).